Consider the following 387-residue polypeptide: Putative purine permease 15 (387 aa).

A run of 10 helical transmembrane segments spans residues 44-64, 84-104, 122-142, 150-169, 179-199, 210-230, 252-272, 306-326, 329-349, and 354-374; these read WVTIIICTILAVTGQCIARLL, TLLQVVGFPILLLPFLLHFLI, LAITYSILCIYMFCQAFFSDV, VFTLTYTTQLLFTLIFSKYY, FISLILAVLAGAFTLYTFSAG, YGIINVAFGAAIFFSLLLCII, FVVVLEMIIFLSLVVTIILVA, VAWQIYWVGIVGLVFAVSAVF, VISVCTWPIVSLLVAFLYNTH, and VFRGIALGAAALSVSCYIYII.

The protein belongs to the purine permeases (TC 2.A.7.14) family.

The protein localises to the membrane. This Arabidopsis thaliana (Mouse-ear cress) protein is Putative purine permease 15 (PUP15).